The following is a 286-amino-acid chain: Putative quercetin 2,3-dioxygenase PA2418 (286 aa).

A divalent metal cation contacts are provided by His-61, His-63, His-105, and Glu-107.

The protein belongs to the pirin family. A divalent metal cation is required as a cofactor.

The enzyme catalyses quercetin + O2 = 2-(3,4-dihydroxybenzoyloxy)-4,6-dihydroxybenzoate + CO. Its pathway is flavonoid metabolism; quercetin degradation. Putative quercetin 2,3-dioxygenase. The chain is Putative quercetin 2,3-dioxygenase PA2418 from Pseudomonas aeruginosa (strain ATCC 15692 / DSM 22644 / CIP 104116 / JCM 14847 / LMG 12228 / 1C / PRS 101 / PAO1).